We begin with the raw amino-acid sequence, 49 residues long: uncharacterized protein (49 aa).

This is an uncharacterized protein from Sulfolobus islandicus filamentous virus (isolate Iceland/Hveragerdi) (SIFV).